Reading from the N-terminus, the 35-residue chain is 3-hydroxyisobutyrate dehydrogenase (35 aa).

4–33 (TPVGFIGLGNMGNPMAKNLMKHGYPLIIYD) provides a ligand contact to NAD(+). An N6-acetyllysine; alternate modification is found at K24. K24 carries the N6-succinyllysine; alternate modification.

It belongs to the HIBADH-related family. 3-hydroxyisobutyrate dehydrogenase subfamily. In terms of assembly, homodimer.

It localises to the mitochondrion. It carries out the reaction 3-hydroxy-2-methylpropanoate + NAD(+) = 2-methyl-3-oxopropanoate + NADH + H(+). The protein operates within amino-acid degradation; L-valine degradation. This chain is 3-hydroxyisobutyrate dehydrogenase (HIBADH), found in Oryctolagus cuniculus (Rabbit).